The chain runs to 227 residues: Nitrobenzene nitroreductase (227 aa).

Residue 14 to 18 (RRAKR) coordinates FMN. NADP(+) is bound by residues serine 44 and isoleucine 109. FMN is bound by residues 172–173 (VF) and lysine 215.

This sequence belongs to the nitroreductase family. Monomer. Requires FMN as cofactor.

The enzyme catalyses N-phenylhydroxylamine + 2 NADP(+) + H2O = nitrobenzene + 2 NADPH + 2 H(+). It functions in the pathway xenobiotic degradation; nitrobenzene degradation. Inhibited by dicumarol, p-hydroxymercuribenzoate and salicyl hydroxamate. In terms of biological role, involved in the biodegradation of nitroaromatic compounds. Catalyzes the two-electron reduction of nitrobenzene (NB) to produce a nitrosobenzene (NOB) intermediate, which is immediately reduced to hydroxylaminobenzene (HAB) by a second two-electron transfer. Also active on menadione and nitrofurazone. Replacing NADPH with NADH results in a 4-fold decrease in the reaction rate. In Ectopseudomonas oleovorans (Pseudomonas oleovorans), this protein is Nitrobenzene nitroreductase.